Here is a 322-residue protein sequence, read N- to C-terminus: Sideroflexin-2 (322 aa).

At Met-1 the chain carries N-acetylmethionine. The next 5 helical transmembrane spans lie at 100 to 122 (MIIT…WQWV), 142 to 164 (SVRQ…AVGM), 174 to 192 (LVGR…CVNI), 228 to 250 (VVIS…MERL), and 265 to 287 (PLQV…GLFP).

Belongs to the sideroflexin family.

Its subcellular location is the mitochondrion inner membrane. It localises to the mitochondrion outer membrane. It catalyses the reaction L-serine(in) = L-serine(out). Its function is as follows. Mitochondrial amino-acid transporter that mediates transport of serine into mitochondria. Involved in mitochondrial iron homeostasis by regulating heme biosynthesis. This is Sideroflexin-2 from Bos taurus (Bovine).